The following is a 92-amino-acid chain: Defensin alpha 4 (92 aa).

An N-terminal signal peptide occupies residues 1 to 19; that stretch reads MKTLVLLSALVLLAFQVQA. Residues 20–58 constitute a propeptide that is removed on maturation; sequence DPIQNTDEETKTEEQPGEEDQAVSISFGGQEGSALHEKS. A disordered region spans residues 23–42; it reads QNTDEETKTEEQPGEEDQAV. Cystine bridges form between Cys64-Cys89, Cys66-Cys81, and Cys71-Cys88.

Belongs to the alpha-defensin family. In terms of tissue distribution, paneth cells of the small bowel.

It is found in the secreted. It localises to the cytoplasmic vesicle. The protein localises to the secretory vesicle. Host-defense peptide that has antimicrobial activity. Exhibits activity against Gram-negative E.coli (in vitro). Probably contributes to the antimicrobial barrier function of the small bowel mucosa. The chain is Defensin alpha 4 from Mus musculus (Mouse).